A 136-amino-acid chain; its full sequence is Cystatin-2 (136 aa).

Positions 1-24 are cleaved as a signal peptide; it reads MALLRGFLVCSLLLLSCICKEALG. Residues 29 to 124 form the Cystatin domain; that stretch reads GGLENASPEE…CTFEVYNIPW (96 aa). The Secondary area of contact motif lies at 73–77; it reads QIVSG. 2 cysteine pairs are disulfide-bonded: cysteine 91–cysteine 101 and cysteine 115–cysteine 135.

Belongs to the cystatin family. In terms of tissue distribution, expressed by the venom gland.

The protein resides in the secreted. Inhibits various C1 cysteine proteases including cathepsin L, papain and cathepsin B. This protein has no toxic activity and its function in the venom is unknown. It may play a role as housekeeping or regulatory protein. The polypeptide is Cystatin-2 (Crotalus adamanteus (Eastern diamondback rattlesnake)).